The chain runs to 635 residues: Bifunctional lysine-specific demethylase and histidyl-hydroxylase NO66 (635 aa).

Disordered stretches follow at residues 1 to 115 and 141 to 190; these read MSAV…LQNS and FNGE…KANG. The span at 84–99 shows a compositional bias: low complexity; that stretch reads ASASDINTSASKNVNA. Positions 141–156 are enriched in polar residues; it reads FNGESLKNNSNHSTPV. The JmjC domain maps to 295 to 440; the sequence is CSIRMLNPQT…DLLELFFPHA (146 aa). Fe cation is bound by residues His-341, Asp-343, and His-406.

It belongs to the ROX family. NO66 subfamily. Fe(2+) serves as cofactor.

The protein resides in the nucleus. It carries out the reaction N(6),N(6)-dimethyl-L-lysyl(36)-[histone H3] + 2 2-oxoglutarate + 2 O2 = L-lysyl(36)-[histone H3] + 2 formaldehyde + 2 succinate + 2 CO2. Its function is as follows. Oxygenase that can act as both a histone lysine demethylase and a ribosomal histidine hydroxylase. Specifically demethylates 'Lys-4' (H3K4me) and 'Lys-36' (H3K36me) of histone H3, thereby playing a central role in histone code. This is Bifunctional lysine-specific demethylase and histidyl-hydroxylase NO66 from Aedes aegypti (Yellowfever mosquito).